The sequence spans 124 residues: Fluoride-specific ion channel FluC (124 aa).

A run of 4 helical transmembrane segments spans residues 4 to 24 (ILAIAVFGAVGCVARYLLAGG), 32 to 52 (AFPWGTLAVNVIGAFLIGLIM), 68 to 88 (GLTIGFLGGFTTFSTFSYETF), and 101 to 121 (LNVLASVALCLVGTWAGIMAA). Residues G75 and T78 each coordinate Na(+).

The protein belongs to the fluoride channel Fluc/FEX (TC 1.A.43) family.

It localises to the cell inner membrane. It carries out the reaction fluoride(in) = fluoride(out). Its activity is regulated as follows. Na(+) is not transported, but it plays an essential structural role and its presence is essential for fluoride channel function. In terms of biological role, fluoride-specific ion channel. Important for reducing fluoride concentration in the cell, thus reducing its toxicity. The chain is Fluoride-specific ion channel FluC from Geobacter sulfurreducens (strain ATCC 51573 / DSM 12127 / PCA).